We begin with the raw amino-acid sequence, 504 residues long: Cytochrome P450 6B7 (504 aa).

Residue Cys445 participates in heme binding.

Belongs to the cytochrome P450 family. It depends on heme as a cofactor.

The protein resides in the endoplasmic reticulum membrane. It localises to the microsome membrane. The catalysed reaction is an organic molecule + reduced [NADPH--hemoprotein reductase] + O2 = an alcohol + oxidized [NADPH--hemoprotein reductase] + H2O + H(+). The chain is Cytochrome P450 6B7 (CYP6B7) from Helicoverpa armigera (Cotton bollworm).